The following is a 204-amino-acid chain: tRNA (pseudouridine(54)-N(1))-methyltransferase (204 aa).

S-adenosyl-L-methionine contacts are provided by L136 and G158.

This sequence belongs to the methyltransferase superfamily. TrmY family. In terms of assembly, homodimer.

It is found in the cytoplasm. The catalysed reaction is pseudouridine(54) in tRNA + S-adenosyl-L-methionine = N(1)-methylpseudouridine(54) in tRNA + S-adenosyl-L-homocysteine + H(+). In terms of biological role, specifically catalyzes the N1-methylation of pseudouridine at position 54 (Psi54) in tRNAs. The sequence is that of tRNA (pseudouridine(54)-N(1))-methyltransferase from Pyrococcus abyssi (strain GE5 / Orsay).